We begin with the raw amino-acid sequence, 259 residues long: MHIEVTGRGPDLVLIHGWALQGGVFAPLVQRLADQFTLHLVDLPGHGHSRDDTTPLRLPFVVNAIAAATPPAVWCGWSLGGLFALHAAATLPKVRGLAMIAATPRFVRGEDWPHAVEPAVFEQFGRELASDFGGTLERFLALDVMGSAHAREELRTLRQRLVERGAPTERALLEGLRLLESTDLRGALPTLGKPSLWIAGQRDRLVSPAAMQAAAALALGGQALTIAHGGHAPFLGHADEVAAALQHFVAGLSPADGGQ.

Substrate-binding positions include W18, 78–79 (SL), and 139–143 (FLALD). Residue S78 is the Nucleophile of the active site. Catalysis depends on residues D203 and H231. A substrate-binding site is contributed by H231.

It belongs to the AB hydrolase superfamily. Carboxylesterase BioH family. As to quaternary structure, monomer.

It localises to the cytoplasm. The enzyme catalyses 6-carboxyhexanoyl-[ACP] methyl ester + H2O = 6-carboxyhexanoyl-[ACP] + methanol + H(+). It participates in cofactor biosynthesis; biotin biosynthesis. Its function is as follows. The physiological role of BioH is to remove the methyl group introduced by BioC when the pimeloyl moiety is complete. It allows to synthesize pimeloyl-ACP via the fatty acid synthetic pathway through the hydrolysis of the ester bonds of pimeloyl-ACP esters. This chain is Pimeloyl-[acyl-carrier protein] methyl ester esterase, found in Stenotrophomonas maltophilia (strain R551-3).